Here is a 360-residue protein sequence, read N- to C-terminus: MERITVTLGERSYPITIAAGLFSDPTSFWPLKAGEQAMLVTNQTLAPLYLDTLCARLEGAGVIVDRVILPDGEQYKTLAVMDQVFSALLAKPHGRDTTLIALGGGVIGDLTGFAAASYQRGVRFIQVPTTLLSQVDSSVGGKTAVNHPLGKNMIGAFYQPAAVVVDLDCLDTLPARELSSGLAEVIKYGIILDGDFFSWLEKNLDALLALDGTAMSRCIRRCCELKAEVVAADEHEHGLRALLNLGHTYGHAIEAHMGYGNWLHGEAVAAGMVMAARTAERLGQFNPQDTDRIISLLQRAGLPVKGPESMTAEEYLPHMMRDKKVLAGEMRLVLPLEIGRAELRRGVAHDIVLASIRDCQ.

NAD(+) contacts are provided by residues 71–76, 105–109, 129–130, K142, K151, and 169–172; these read DGEQYK, GVIGD, TT, and CLDT. Residues E184, H247, and H264 each coordinate Zn(2+).

It belongs to the sugar phosphate cyclases superfamily. Dehydroquinate synthase family. It depends on Co(2+) as a cofactor. Requires Zn(2+) as cofactor. The cofactor is NAD(+).

The protein localises to the cytoplasm. The enzyme catalyses 7-phospho-2-dehydro-3-deoxy-D-arabino-heptonate = 3-dehydroquinate + phosphate. It participates in metabolic intermediate biosynthesis; chorismate biosynthesis; chorismate from D-erythrose 4-phosphate and phosphoenolpyruvate: step 2/7. Its function is as follows. Catalyzes the conversion of 3-deoxy-D-arabino-heptulosonate 7-phosphate (DAHP) to dehydroquinate (DHQ). In Erwinia tasmaniensis (strain DSM 17950 / CFBP 7177 / CIP 109463 / NCPPB 4357 / Et1/99), this protein is 3-dehydroquinate synthase.